The sequence spans 43 residues: Protein PsbN (43 aa).

A helical transmembrane segment spans residues threonine 5–phenylalanine 27.

This sequence belongs to the PsbN family.

The protein localises to the plastid. It is found in the chloroplast thylakoid membrane. May play a role in photosystem I and II biogenesis. In Chara vulgaris (Common stonewort), this protein is Protein PsbN.